Reading from the N-terminus, the 248-residue chain is Tyrosine recombinase XerD-like (248 aa).

The Core-binding (CB) domain occupies 1–72 (MKSYIEPFIA…TANQFLYYLY (72 aa)). Residues 85 to 248 (DTMKVMRTEK…PVTLEKYYKS (164 aa)) form the Tyr recombinase domain. Residues Lys-149 and Arg-213 contribute to the active site. The active-site O-(3'-phospho-DNA)-tyrosine intermediate is Tyr-245.

The protein belongs to the 'phage' integrase family. XerD-like subfamily.

It localises to the cytoplasm. Functionally, putative tyrosine recombinase. Not involved in the cutting and rejoining of the recombining DNA molecules on dif(SL) site. This is Tyrosine recombinase XerD-like from Streptococcus pyogenes serotype M28 (strain MGAS6180).